We begin with the raw amino-acid sequence, 347 residues long: Mitochondrial carrier protein rim2 (347 aa).

Solcar repeat units follow at residues 32-136 (PPPL…GKRI), 146-234 (ENSQ…FKHA), and 256-345 (LDWG…IMHF). The next 6 helical transmembrane spans lie at 38-58 (FIAG…LDVV), 105-125 (TRAL…ARSI), 152-172 (LMAA…IWLV), 214-233 (SLLG…KFKH), 262-282 (LGGA…HEVV), and 317-338 (LYGG…LFGS).

The protein resides in the mitochondrion inner membrane. It carries out the reaction 5-methyl-UTP(out) + UTP(in) = 5-methyl-UTP(in) + UTP(out). Functionally, mitochondrial transporter that imports/exports pyrimidine nucleotides into and from mitochondria. Selectively transports uridine, thymidine, and cytosine (deoxy)nucleoside di- and triphosphates by an antiport mechanism. Also transports, with lower efficiency, uridine, thymidine, and cytosine (deoxy)nucleoside monophosphates as well as guanosine (deoxy)nucleoside di- and triphosphate. May import (deoxy)nucleoside triphosphates in exchange for intramitochondrial (deoxy)nucleoside monophosphates, thus providing precursors necessary for de novo synthesis of mitochondrial DNA and RNA while exporting products of their catabolism. Mediates the transport of iron and other divalent metal ions like copper and zinc across the mitochondrial inner membrane in a pyrimidine nucleotide-dependent fashion. Catalyzes the co-import of pyrimidine nucleotides and divalent metal ions including ferrous iron. Participates in mitochondrial genome maintenance, regulation of mitochondrial membrane potential and mitochondrial respiration. In Schizosaccharomyces pombe (strain 972 / ATCC 24843) (Fission yeast), this protein is Mitochondrial carrier protein rim2 (rim2).